A 73-amino-acid polypeptide reads, in one-letter code: UPF0435 protein OB1527 (73 aa).

It belongs to the UPF0435 family.

The protein is UPF0435 protein OB1527 of Oceanobacillus iheyensis (strain DSM 14371 / CIP 107618 / JCM 11309 / KCTC 3954 / HTE831).